Here is a 329-residue protein sequence, read N- to C-terminus: Acetyl-coenzyme A carboxylase carboxyl transferase subunit alpha (329 aa).

One can recognise a CoA carboxyltransferase C-terminal domain in the interval 40 to 294; sequence QLETLAARRR…KNALEKHLSE (255 aa).

The protein belongs to the AccA family. As to quaternary structure, acetyl-CoA carboxylase is a heterohexamer composed of biotin carboxyl carrier protein (AccB), biotin carboxylase (AccC) and two subunits each of ACCase subunit alpha (AccA) and ACCase subunit beta (AccD).

It is found in the cytoplasm. It carries out the reaction N(6)-carboxybiotinyl-L-lysyl-[protein] + acetyl-CoA = N(6)-biotinyl-L-lysyl-[protein] + malonyl-CoA. It functions in the pathway lipid metabolism; malonyl-CoA biosynthesis; malonyl-CoA from acetyl-CoA: step 1/1. Functionally, component of the acetyl coenzyme A carboxylase (ACC) complex. First, biotin carboxylase catalyzes the carboxylation of biotin on its carrier protein (BCCP) and then the CO(2) group is transferred by the carboxyltransferase to acetyl-CoA to form malonyl-CoA. In Prochlorococcus marinus (strain NATL1A), this protein is Acetyl-coenzyme A carboxylase carboxyl transferase subunit alpha.